The primary structure comprises 192 residues: Peptide deformylase (192 aa).

Fe cation-binding residues include Cys102 and His145. Residue Glu146 is part of the active site. His149 is a Fe cation binding site.

This sequence belongs to the polypeptide deformylase family. Requires Fe(2+) as cofactor.

It catalyses the reaction N-terminal N-formyl-L-methionyl-[peptide] + H2O = N-terminal L-methionyl-[peptide] + formate. Its function is as follows. Removes the formyl group from the N-terminal Met of newly synthesized proteins. Requires at least a dipeptide for an efficient rate of reaction. N-terminal L-methionine is a prerequisite for activity but the enzyme has broad specificity at other positions. The sequence is that of Peptide deformylase from Thermus thermophilus (strain ATCC BAA-163 / DSM 7039 / HB27).